A 301-amino-acid polypeptide reads, in one-letter code: UDP-N-acetylenolpyruvoylglucosamine reductase (301 aa).

An FAD-binding PCMH-type domain is found at 30–194 (VGGEADYLVF…LSVKFALAPG (165 aa)). Residue Arg173 is part of the active site. Ser223 (proton donor) is an active-site residue. Glu293 is a catalytic residue.

Belongs to the MurB family. It depends on FAD as a cofactor.

The protein localises to the cytoplasm. It catalyses the reaction UDP-N-acetyl-alpha-D-muramate + NADP(+) = UDP-N-acetyl-3-O-(1-carboxyvinyl)-alpha-D-glucosamine + NADPH + H(+). Its pathway is cell wall biogenesis; peptidoglycan biosynthesis. Cell wall formation. This Streptococcus pneumoniae (strain JJA) protein is UDP-N-acetylenolpyruvoylglucosamine reductase.